We begin with the raw amino-acid sequence, 32 residues long: Turripeptide XIV-18 (32 aa).

I30 is subject to Isoleucine amide.

In terms of processing, contains 2 disulfide bonds. In terms of tissue distribution, expressed by the venom duct.

The protein localises to the secreted. The chain is Turripeptide XIV-18 from Gemmula speciosa (Splendid gem-turris).